We begin with the raw amino-acid sequence, 573 residues long: Urease subunit alpha 2 (573 aa).

Residues 135–573 (GGMDTHVHYI…ISLNQLYFFS (439 aa)) enclose the Urease domain. Ni(2+) is bound by residues H140, H142, and K223. N6-carboxylysine is present on K223. H225 lines the substrate pocket. Ni(2+) is bound by residues H252 and H278. H326 serves as the catalytic Proton donor. Residue D366 coordinates Ni(2+).

The protein belongs to the metallo-dependent hydrolases superfamily. Urease alpha subunit family. Heterotrimer of UreA (gamma), UreB (beta) and UreC (alpha) subunits. Three heterotrimers associate to form the active enzyme. Ni cation serves as cofactor. In terms of processing, carboxylation allows a single lysine to coordinate two nickel ions.

The protein resides in the cytoplasm. The catalysed reaction is urea + 2 H2O + H(+) = hydrogencarbonate + 2 NH4(+). It participates in nitrogen metabolism; urea degradation; CO(2) and NH(3) from urea (urease route): step 1/1. The sequence is that of Urease subunit alpha 2 from Brucella melitensis biotype 1 (strain ATCC 23456 / CCUG 17765 / NCTC 10094 / 16M).